The following is a 214-amino-acid chain: MMRRRNKKTKTVISNPETLEERNKFDEIPHDLVIEILGRLPAKSVARFLTVSKLWATSIRSLDFIKSYPLGSSSKPRTLVASKQVVANPSTGRTIPLPRVKTRRTIATSFFGYDSVSDQYKVLCMTVKAYGDLRDESSQHQVFTLGAKKKSFRMIDTSIIPHRPCSNGVCIDSVVYYVAKTGAGMLHLCIMRFDLSSEILDLFTSLPQEIRPPS.

The region spanning 22–68 (RNKFDEIPHDLVIEILGRLPAKSVARFLTVSKLWATSIRSLDFIKSY) is the F-box domain.

This Arabidopsis thaliana (Mouse-ear cress) protein is Putative F-box protein At5g15670.